Here is a 411-residue protein sequence, read N- to C-terminus: Histidine--tRNA ligase (411 aa).

This sequence belongs to the class-II aminoacyl-tRNA synthetase family. As to quaternary structure, homodimer.

It localises to the cytoplasm. The enzyme catalyses tRNA(His) + L-histidine + ATP = L-histidyl-tRNA(His) + AMP + diphosphate + H(+). The protein is Histidine--tRNA ligase of Dictyoglomus turgidum (strain DSM 6724 / Z-1310).